The sequence spans 861 residues: APC membrane recruitment protein 3 (861 aa).

8 disordered regions span residues 1–77, 179–206, 261–289, 351–415, 514–558, 576–644, 716–742, and 786–822; these read MELK…PKGG, AEGK…PPGE, PSLE…GPLQ, PLCP…FPRD, RGPT…GGAT, GLLA…SQKE, MLEQ…STQD, and AHGS…SQQE. Residues 362–384 show a composition bias toward polar residues; the sequence is SKASSIDTGTPKSEQPESVSTSD. Residues 518–530 show a composition bias toward pro residues; the sequence is PRAPPTPGQPAAP. Residues 584–595 are compositionally biased toward low complexity; the sequence is ALGGATQGTGTL. Residues 598 to 609 are compositionally biased toward basic and acidic residues; that stretch reads DASREEETRGHS. 2 stretches are compositionally biased toward polar residues: residues 615–629 and 719–730; these read SMES…TSGK and QKQSSSSPSMTT.

The protein belongs to the Amer family.

The protein resides in the cell membrane. Regulator of the canonical Wnt signaling pathway. Acts by specifically binding phosphatidylinositol 4,5-bisphosphate (PtdIns(4,5)P2), translocating to the cell membrane. This Homo sapiens (Human) protein is APC membrane recruitment protein 3 (AMER3).